Consider the following 423-residue polypeptide: MTDDKAVPRTDYKLESDSELRFEIENKNEKVTVVLLNGQAELFGTELVVKKPYEFVTGAKVAIFTYHGCTIELRGKPDVAYVAKETPMVMYLNANSALEHLRNKAEQEDAQGPIVMVVGPTDVGKTTLCRIFLNYAVRLGRRPIFVDLDVGQGGIAIPGTIGALLVERPAPVAEGFSQQAPLVYHYGHSTPSANSTFYDVLISKLAETTLERLQANKKAKSSGMIINTCGWVKGSGYSHILHTVEAFEVTAIFVLDQERLYNELLRDVKGTVQVVFLPKSGGVVERTKSQRTEARDQRIREYFYGSKMPLFPHSFDVKFSDIKIFKVGSPPLPDSCLPLGMKAEDNYTKLVAVQPGPQLLHHILAVSFAESTDENVIQTNVAGFICVTNVNMDKQVLTVLSPQPRPLPQTILLVSDLQFMDSH.

ATP is bound by residues glutamate 19, lysine 60, and aspartate 122 to threonine 127.

Belongs to the Clp1 family. Clp1 subfamily.

The protein resides in the nucleus. Its function is as follows. Required for endonucleolytic cleavage during polyadenylation-dependent pre-mRNA 3'-end formation. The sequence is that of Protein CLP1 homolog (cbc) from Anopheles gambiae (African malaria mosquito).